Consider the following 124-residue polypeptide: Small ribosomal subunit protein uS12 (124 aa).

Residues 1 to 28 form a disordered region; the sequence is MPTISQLVGSERKRLTKKTKSPALKSCP. D89 is modified (3-methylthioaspartic acid). A disordered region spans residues 104-124; that stretch reads TAGVKDRRQSRSKYGAKAPKD.

It belongs to the universal ribosomal protein uS12 family. In terms of assembly, part of the 30S ribosomal subunit. Contacts proteins S8 and S17. May interact with IF1 in the 30S initiation complex.

In terms of biological role, with S4 and S5 plays an important role in translational accuracy. Functionally, interacts with and stabilizes bases of the 16S rRNA that are involved in tRNA selection in the A site and with the mRNA backbone. Located at the interface of the 30S and 50S subunits, it traverses the body of the 30S subunit contacting proteins on the other side and probably holding the rRNA structure together. The combined cluster of proteins S8, S12 and S17 appears to hold together the shoulder and platform of the 30S subunit. In Prochlorococcus marinus (strain MIT 9301), this protein is Small ribosomal subunit protein uS12.